Consider the following 156-residue polypeptide: Probable succinate transporter subunit YjjB (156 aa).

4 helical membrane passes run 7 to 27, 54 to 74, 86 to 106, and 128 to 148; these read WALL…AMVF, FGMN…IIGI, VFTV…TAMI, and FLKA…PGIW.

It belongs to the ThrE exporter (TC 2.A.79) family. As to quaternary structure, the transporter is composed of YjjB and YjjP.

The protein resides in the cell inner membrane. Its function is as follows. Involved in succinate export with YjjP. Both proteins are required for export. The sequence is that of Probable succinate transporter subunit YjjB from Pectobacterium carotovorum subsp. carotovorum (strain PC1).